The sequence spans 109 residues: Homeobox protein E30 (109 aa).

Basic residues predominate over residues 1-12 (GPRTRRVKRSHN). The disordered stretch occupies residues 1–27 (GPRTRRVKRSHNGKNGSPEEKRPRTAF). Residues 20–79 (EKRPRTAFSAEQLARLKREFAENRYLTERRRQQLSRDLGLTEAQIKIWFQNKRAKIKKAS) constitute a DNA-binding region (homeobox).

It belongs to the engrailed homeobox family.

Its subcellular location is the nucleus. This Apis mellifera (Honeybee) protein is Homeobox protein E30.